The chain runs to 142 residues: Large-conductance mechanosensitive channel (142 aa).

3 helical membrane passes run 10–30 (FAVK…GAFG), 40–60 (LIMP…LFVV), and 86–106 (GNFI…FMMV).

Belongs to the MscL family. In terms of assembly, homopentamer.

It is found in the cell inner membrane. Its function is as follows. Channel that opens in response to stretch forces in the membrane lipid bilayer. May participate in the regulation of osmotic pressure changes within the cell. The protein is Large-conductance mechanosensitive channel of Delftia acidovorans (strain DSM 14801 / SPH-1).